The chain runs to 123 residues: Small ribosomal subunit protein uS12 (123 aa).

3-methylthioaspartic acid is present on Asp89. Positions 104–123 (TAGVQDRRQGRSKYGAKRPK) are disordered. Positions 113 to 123 (GRSKYGAKRPK) are enriched in basic residues.

Belongs to the universal ribosomal protein uS12 family. As to quaternary structure, part of the 30S ribosomal subunit. Contacts proteins S8 and S17. May interact with IF1 in the 30S initiation complex.

In terms of biological role, with S4 and S5 plays an important role in translational accuracy. Interacts with and stabilizes bases of the 16S rRNA that are involved in tRNA selection in the A site and with the mRNA backbone. Located at the interface of the 30S and 50S subunits, it traverses the body of the 30S subunit contacting proteins on the other side and probably holding the rRNA structure together. The combined cluster of proteins S8, S12 and S17 appears to hold together the shoulder and platform of the 30S subunit. The chain is Small ribosomal subunit protein uS12 from Oleidesulfovibrio alaskensis (strain ATCC BAA-1058 / DSM 17464 / G20) (Desulfovibrio alaskensis).